Here is a 403-residue protein sequence, read N- to C-terminus: Octaketide synthase 2 (403 aa).

C174 is a catalytic residue. Residues S281 and 318–321 (GGRA) each bind CoA.

This sequence belongs to the thiolase-like superfamily. Chalcone/stilbene synthases family. In terms of assembly, homodimer.

Its pathway is secondary metabolite biosynthesis; flavonoid biosynthesis. Catalyzes the iterative condensations of 8 molecules of malonyl-CoA to produce aromatic octaketides, SEK4 and SEK4b, the products of the minimal polyketide synthase for the benzoisochromanequinone actinorhodin. May be involved in the biosynthesis of the octaketide barbaloin. In Aloe arborescens (Kidachi aloe), this protein is Octaketide synthase 2 (PKS4).